Reading from the N-terminus, the 286-residue chain is uncharacterized protein (286 aa).

In terms of domain architecture, Radical SAM core spans 2–221 (VDGMKHLILK…PIYIKNLQKR (220 aa)). Residues Cys-16, Cys-20, and Cys-23 each coordinate [4Fe-4S] cluster.

The protein belongs to the radical SAM superfamily. Anaerobic sulfatase-maturating enzyme family. It depends on [4Fe-4S] cluster as a cofactor.

This is an uncharacterized protein from Methanocaldococcus jannaschii (strain ATCC 43067 / DSM 2661 / JAL-1 / JCM 10045 / NBRC 100440) (Methanococcus jannaschii).